Reading from the N-terminus, the 470-residue chain is FAD-dependent monooxygenase dpchE (470 aa).

The signal sequence occupies residues 1-24 (MSEPHFKVIIVGGSITGLTLAHSL). Residues glutamate 35, glycine 49, and arginine 108 each contribute to the FAD site. Asparagine 128 is a glycosylation site (N-linked (GlcNAc...) asparagine). Arginine 193 is an active-site residue. The FAD site is built by aspartate 312 and alanine 325. The helical transmembrane segment at 447–463 (WAVVSRSVLLLVGLAIL) threads the bilayer.

The protein belongs to the paxM FAD-dependent monooxygenase family. It depends on FAD as a cofactor.

It is found in the membrane. It participates in secondary metabolite biosynthesis; terpenoid biosynthesis. In terms of biological role, FAD-dependent monooxygenase; part of the gene cluster that mediates the biosynthesis of the diterpenoid pyrones higginsianins A and B. The first step of the pathway is the synthesis of the alpha-pyrone moiety by the polyketide synthase dpchA via condensation of one acetyl-CoA starter unit with 3 malonyl-CoA units and 2 methylations. The alpha-pyrone is then combined with geranylgeranyl pyrophosphate (GGPP) formed by the GGPP synthase dpchD through the action of the prenyltransferase dpchC to yield a linear alpha-pyrone diterpenoid. Subsequent steps in the diterpenoid pyrone biosynthetic pathway involve the decalin core formation, which is initiated by the epoxidation of the C10-C11 olefin by the FAD-dependent oxidoreductase dpchE, and is followed by a cyclization cascade catalyzed by the terpene cyclase dpchB. The short chain dehydrogenase/reductase dpchG then oxidizes the 8S hydroxy group to a ketone and the short chain dehydrogenase/reductase dpchH reduces the ketone to the 8R hydroxy group to yield higginsianin B. Finally, the FAD-dependent oxidoreductase dpchF converts higginsianin B into higginsianin A. The sequence is that of FAD-dependent monooxygenase dpchE from Colletotrichum higginsianum (strain IMI 349063) (Crucifer anthracnose fungus).